The primary structure comprises 693 residues: Ion-translocating oxidoreductase complex subunit C (693 aa).

4Fe-4S ferredoxin-type domains follow at residues 368–397 (MEPV…QQLY) and 407–436 (KARD…VQYY). [4Fe-4S] cluster-binding residues include cysteine 377, cysteine 380, cysteine 383, cysteine 387, cysteine 416, cysteine 419, cysteine 422, and cysteine 426. A compositionally biased stretch (basic and acidic residues) spans 539 to 548 (REERVREKQS). Residues 539–564 (REERVREKQSQQETPATEVTPEELDP) form a disordered region.

Belongs to the 4Fe4S bacterial-type ferredoxin family. RnfC subfamily. In terms of assembly, the complex is composed of six subunits: RnfA, RnfB, RnfC, RnfD, RnfE and RnfG. The cofactor is [4Fe-4S] cluster.

Its subcellular location is the cell inner membrane. Functionally, part of a membrane-bound complex that couples electron transfer with translocation of ions across the membrane. The chain is Ion-translocating oxidoreductase complex subunit C from Pectobacterium atrosepticum (strain SCRI 1043 / ATCC BAA-672) (Erwinia carotovora subsp. atroseptica).